The following is a 1015-amino-acid chain: MSGGLFYNPFLRPNKGLLKKPDKEYLRLIPKCFQTPGAAGVVDVRGPQPPLCFYQDSLTVVGGDEDGKGMWWRQRAQEGTARPEADTHGSPLDFHVYDILETVYTHEKCAVIPSDKQGYVVPCGIVIKLLGRRKADGASVCVNVFGQQAYFYASAPQGLDVEFAVLSALKASTFDRRTPCRVSVEKVTRRSIMGYGNHAGDYHKITLSHPNSVCHVATWLQDKHGCRIFEANVDATRRFVLDNDFVTFGWYSCRRAIPRLQHRDSYAELEYDCEVGDLSVRREDSSWPSYQALAFDIECLGEEGFPTATNEADLILQISCVLWSTGEEAGRYRRILLTLGTCEDIEGVEVYEFPSELDMLYAFFQLIRDLSVEIVTGYNVANFDWPYILDRARHIYSINPASLGKIRAGGVCEVRRPHDAGKGFLRANTKVRITGLIPIDMYAVCRDKLSLSDYKLDTVARHLLGAKKEDVHYKEIPRLFAAGPEGRRRLGMYCVQDSALVMDLLNHFVIHVEVAEIAKIAHIPCRRVLDDGQQIRVFSCLLAAAQKENFILPMPSASDRDGYQGATVIQPLSGFYNSPVLVVDFASLYPSIIQAHNLCYSTMITPGEEHRLAGLRPGEDYESFRLTGGVYHFVKKHVHESFLASLLTSWLAKRKAIKKLLAACEDPRQRTILDKQQLAIKCTCNAVYGFTGVANGLFPCLSIAETVTLQGRTMLERAKAFVEALSPANLQALAPSPDAWAPLNPEGQLRVIYGDTDSLFIECRGFSESETLRFADALAAHTTRSLFVAPISLEAEKTFSCLMLITKKRYVGVLTDGKTLMKGVELVRKTACKFVQTRCRRVLDLVLADARVKEAASLLSHRPFQESFTQGLPVGFLPVIDILNQAYTDLREGRVPMGELCFSTELSRKLSAYKSTQMPHLAVYQKFVERNEELPQIHDRIQYVFVEPKGGVKGARKTEMAEDPAYAERHGVPVAVDHYFDKLLQGAANILQCLFDNNSGAALSVLQNFTARPPF.

The protein belongs to the DNA polymerase type-B family. As to quaternary structure, forms a complex with the ssDNA-binding protein BALF2, the DNA polymerase processivity factor BMRF1, and the alkaline exonuclease BGLF5. Interacts with the putative helicase-primase complex composed of BBLF4, BSLF1 and BBLF2/3 proteins; these interactions may coordinate leading and lagging strand DNA synthesis at the replication fork.

The protein resides in the host nucleus. It catalyses the reaction DNA(n) + a 2'-deoxyribonucleoside 5'-triphosphate = DNA(n+1) + diphosphate. Functionally, replicates viral genomic DNA in the late phase of lytic infection, producing long concatemeric DNA. The replication complex is composed of six viral proteins: the DNA polymerase, processivity factor, primase, primase-associated factor, helicase, and ssDNA-binding protein. The sequence is that of DNA polymerase catalytic subunit from Epstein-Barr virus (strain B95-8) (HHV-4).